An 835-amino-acid polypeptide reads, in one-letter code: BCL11 transcription factor A (835 aa).

Basic residues predominate over residues Met-1 to Leu-12. Positions Met-1–Gly-41 are disordered. The required for nuclear body formation and for SUMO1 recruitment stretch occupies residues Met-1–Arg-210. Residues Leu-45–Cys-71 form a C2HC-type zinc finger. Residues Cys-48, Cys-51, His-66, and Cys-71 each coordinate Zn(2+). A Phosphoserine modification is found at Ser-86. Glycyl lysine isopeptide (Lys-Gly) (interchain with G-Cter in SUMO2) cross-links involve residues Lys-123 and Lys-164. A C2H2-type 1 zinc finger spans residues Tyr-170 to His-193. A Phosphoserine modification is found at Ser-205. Arg-271 carries the post-translational modification Asymmetric dimethylarginine. The segment at Ala-323–Ser-376 is disordered. Ser-332 and Ser-337 each carry phosphoserine. Residues Leu-355–Pro-372 show a composition bias toward pro residues. 2 consecutive C2H2-type zinc fingers follow at residues Lys-377–His-399 and Tyr-405–His-429. Over residues Lys-421 to Lys-430 the composition is skewed to basic residues. Disordered stretches follow at residues Lys-421–Ser-458, Lys-471–Asp-512, and Arg-572–Lys-619. Polar residues predominate over residues Gly-441–Pro-450. Residues Ser-446 and Ser-447 each carry the phosphoserine modification. A compositionally biased stretch (acidic residues) spans Asn-482–Thr-506. Over residues His-574–Thr-584 the composition is skewed to basic and acidic residues. Ser-608 is subject to Phosphoserine. Lys-620 participates in a covalent cross-link: Glycyl lysine isopeptide (Lys-Gly) (interchain with G-Cter in SUMO2). Phosphoserine occurs at positions 625 and 630. Lys-634 participates in a covalent cross-link: Glycyl lysine isopeptide (Lys-Gly) (interchain with G-Cter in SUMO1). Positions Asp-678–Arg-740 are disordered. Residues Ser-682 to Ser-696 show a composition bias toward low complexity. Position 701 is a phosphothreonine (Thr-701). The span at Leu-706 to Gly-720 shows a compositional bias: gly residues. Positions Glu-737–Glu-835 are DNA-binding. The C2H2-type 4 zinc finger occupies Asp-742–His-764. Zn(2+)-binding residues include Cys-744, Cys-747, His-760, and His-764. Residues Thr-765–Pro-769 form a disordered region. Residues Tyr-770 to His-792 form a C2H2-type 5 zinc finger. Residues Cys-772, Cys-775, His-788, and His-792 each contribute to the Zn(2+) site. A disordered region spans residues Gly-793 to Val-799. The C2H2-type 6 zinc finger occupies Tyr-800 to His-823. Positions 802, 805, 818, and 823 each coordinate Zn(2+). A Glycyl lysine isopeptide (Lys-Gly) (interchain with G-Cter in SUMO2) cross-link involves residue Lys-833.

As to quaternary structure, homotetrameric; self-associates via C2HC-type zinc finger domain. Interacts with MTA2, a component of the nucleosome remodeling and deacetylase (NuRD) repressor complex. Interacts (via its C2H2-type zinc finger domains 4, 5 and 6) with promoter region of gamma-globulin. Interacts with NR2F1, PIAS3, NR2F2 and NR2F6. Isoform 1, isoform 2 and isoform 3 form homodimers and heterodimers. Isoform 2 interacts with TBR1. Sumoylated with SUMO1. As to expression, expressed at high levels in brain, spleen thymus, bone marrow and testis. Expressed in CD34-positive myeloid precursor cells, B-cells, monocytes and megakaryocytes. Expression is tightly regulated during B-cell development. In terms of tissue distribution, expressed in fetal and adult brain, and in the plasmacytoid dendritic cell.

Its subcellular location is the cytoplasm. It localises to the nucleus. The protein resides in the chromosome. The protein localises to the nucleus matrix. Its function is as follows. Transcription factor. Associated with the BAF SWI/SNF chromatin remodeling complex. Binds to the 5'-TGACCA-3' sequence motif in regulatory regions of target genes, including a distal promoter of the HBG1 hemoglobin subunit gamma-1 gene. Involved in regulation of the developmental switch from gamma- to beta-globin, probably via direct repression of HBG1; hence indirectly repressing fetal hemoglobin (HbF) level. Involved in brain development. May play a role in hematopoiesis. Essential factor in lymphopoiesis required for B-cell formation in fetal liver. May function as a modulator of the transcriptional repression activity of NR2F2. This is BCL11 transcription factor A (BCL11A) from Homo sapiens (Human).